The primary structure comprises 813 residues: Receptor-like protein 48 (813 aa).

The first 30 residues, 1 to 30 (MHSCSERRMMTVIWSLCLIFCLSNSILAIA), serve as a signal peptide directing secretion. The Extracellular portion of the chain corresponds to 31-786 (KDLCLPDQRD…EDEEKEEKNQ (756 aa)). N-linked (GlcNAc...) asparagine glycans are attached at residues asparagine 69, asparagine 105, and asparagine 123. LRR repeat units lie at residues 111-134 (LQHLQSLELSSNNISGILPDSIGN), 136-159 (KYLRSLSFRTCHLFGKIPSSLGSL), and 160-182 (SYLTHLDLSYNDFTSEGPDSGGN). 2 N-linked (GlcNAc...) asparagine glycosylation sites follow: asparagine 195 and asparagine 216. LRR repeat units follow at residues 196–219 (LSSVTWIDLGSNQLKGMLPSNMSS), 220–244 (LSKLVSFDISENSFSGSIPSSLFMI), 245–260 (PSLNFSGPLEIGNISS), 261–285 (HSELGYLYMGENNFNGPIPGSLSKL), 288–310 (LRDLSLSFWNTGRGIVDFSIFLH), 311–335 (LKSLCSLDLSYLNTRSMVDLSFFSH), 336–359 (LMSLDELDLSGINLKISSTLSFPS), 361–381 (TGTLILASCNIVEFPKFLENQ), 382–405 (TSLFYLDISANHIEGQVPEWLWRL), 406–432 (PTLSFVNIAQNSFSGELPMLPNSIYSF), 434–450 (ASDNQFSGEIPRTVCEL), 451–473 (VSLNTLVLSNNKFSGSIPRCFEN), 475–498 (KTISILHLRNNSLSGVFPKEIISE), 500–521 (LTSLDVGHNWLSGQLPKSLIKC), 523–544 (DLEFLNVEDNRINDKFPFWLRS), 545–571 (LSNLQILVLRSNEFYGPIFSLEDSLSF), 572–595 (PKLRIFDISENHFTGVLPSDYFAG), 642–666 (FTIYKTIDVSGNRLEGDIPESIGIL), 667–690 (KELIVLNMSNNAFTGHIPPSLSNL), 691–714 (SNLQSLDLSQNRLSGSIPPELGKL), and 716–739 (FLEWMNFSYNRLEGPIPQATQIQS). Residues asparagine 248 and asparagine 257 are each glycosylated (N-linked (GlcNAc...) asparagine). N-linked (GlcNAc...) asparagine glycosylation is present at asparagine 380. Asparagine 484 is a glycosylation site (N-linked (GlcNAc...) asparagine). N-linked (GlcNAc...) asparagine glycans are attached at residues asparagine 673 and asparagine 689. N-linked (GlcNAc...) asparagine glycosylation is found at asparagine 721 and asparagine 741. Residues 756–785 (FLNKCGGEEEEEEEATKQEEDEDEEKEEKN) are disordered. Over residues 763–781 (EEEEEEEATKQEEDEDEEK) the composition is skewed to acidic residues. Residues 787 to 807 (VFSWIAAAIGYVPGVFCGLTI) traverse the membrane as a helical segment. Topologically, residues 808–813 (AHILTS) are cytoplasmic.

It belongs to the RLP family.

Its subcellular location is the cell membrane. Its function is as follows. Plays a role in root hair development. The protein is Receptor-like protein 48 of Arabidopsis thaliana (Mouse-ear cress).